The chain runs to 167 residues: Peptidyl-prolyl cis-trans isomerase-like 3 (167 aa).

A PPIase cyclophilin-type domain is found at 1-160; that stretch reads MSVTLHTTLG…EEVRIERVTV (160 aa).

It belongs to the cyclophilin-type PPIase family. PPIL3 subfamily.

It carries out the reaction [protein]-peptidylproline (omega=180) = [protein]-peptidylproline (omega=0). Functionally, PPIases accelerate the folding of proteins. It catalyzes the cis-trans isomerization of proline imidic peptide bonds in oligopeptides. The protein is Peptidyl-prolyl cis-trans isomerase-like 3 (cyp-10) of Neurospora crassa (strain ATCC 24698 / 74-OR23-1A / CBS 708.71 / DSM 1257 / FGSC 987).